The following is a 344-amino-acid chain: FCS-Like Zinc finger 10 (344 aa).

An FLZ-type zinc finger spans residues Asp270 to Glu314. The span at Leu309 to Glu320 shows a compositional bias: acidic residues. The segment at Leu309–Gly344 is disordered.

Belongs to the FLZ family. As to quaternary structure, interacts with KIN10 and KIN11 via its FLZ-type zinc finger domain. Interacts with KINB1, KINB2 and KINB3 via its N-terminal part. Forms homodimer and heterodimer with FLZ2 and FLZ12 in vitro. Early expressed in hypocotyl and cotyledon and preferentially in the stelar region of the shoot and root. Later expressed in root-shoot junction, lateral root, old or senescing leaves and in pistil and pollen of flower buds or open flowers.

The protein resides in the cytoplasm. It localises to the nucleus. It is found in the endoplasmic reticulum. May act as an adapter to facilitate the interaction of SnRK1 complex with effector proteins, conferring tissue- and stimulus-type specific differences in the SnRK1 regulation pathway. Negatively regulates KIN10 leading to a repression of the SnRK1 signaling pathway. The protein is FCS-Like Zinc finger 10 of Arabidopsis thaliana (Mouse-ear cress).